A 323-amino-acid chain; its full sequence is MAALIAENFRFLSLFFKSKDVMIFNGLVALGTVGSQELFSVVAFHCPCSPARNYLYGLTAIGVPALALFLIGVILNNHTWNLVAECQYRRAKNCSAAPTFLLLSSILGRAAVAPVTWSVISLLRGEAYVCALSEFVDPSSLTAGDEGFPPDHATEILARFPCGEGPANLSGFREEVSRRLKYESQLFGWLLIGVVAILVFLTKCFKHYCSPLSYRQEAYWAQYRTNEDQLFQRTAEVHSRVLAANNVRRFFGFVALNKDDEELVTKFPVEGTQPRPQWNAITGVYLYRENQGLPLYSRLHKWAQGLTGNGTAPDNVEMALLTV.

Topologically, residues 1–21 (MAALIAENFRFLSLFFKSKDV) are cytoplasmic. The segment at 14–39 (LFFKSKDVMIFNGLVALGTVGSQELF) is central pore. A helical membrane pass occupies residues 22–43 (MIFNGLVALGTVGSQELFSVVA). At 44-52 (FHCPCSPAR) the chain is on the extracellular side. Disulfide bonds link cysteine 46–cysteine 130 and cysteine 48–cysteine 162. Residues 53–76 (NYLYGLTAIGVPALALFLIGVILN) form a helical membrane-spanning segment. Over 77–101 (NHTWNLVAECQYRRAKNCSAAPTFL) the chain is Cytoplasmic. A helical transmembrane segment spans residues 102 to 132 (LLSSILGRAAVAPVTWSVISLLRGEAYVCAL). The Extracellular portion of the chain corresponds to 133 to 179 (SEFVDPSSLTAGDEGFPPDHATEILARFPCGEGPANLSGFREEVSRR). Residues 145-152 (DEGFPPDH) form a hemichannel docking region. The helical transmembrane segment at 180 to 206 (LKYESQLFGWLLIGVVAILVFLTKCFK) threads the bilayer. Topologically, residues 207–323 (HYCSPLSYRQ…DNVEMALLTV (117 aa)) are cytoplasmic. The intersubunit interaction stretch occupies residues 214 to 251 (YRQEAYWAQYRTNEDQLFQRTAEVHSRVLAANNVRRFF).

This sequence belongs to the CALHM family. Homo-undecamer. Two undecameric hemichannels can assemble in a head-to-head manner to form a gap junction.

It localises to the cell membrane. It carries out the reaction ATP(in) = ATP(out). Functionally, pore-forming subunit of Ca(2+) homeostasis modulator channels. Mediates ATP release from astrocytes and ATP-induced Ca(2+) influx in microglia thus regulating neuronal ATP and Ca(2+) homeostasis, synaptic transmission and neuroinflammatory response. May form intercellular gap junctions. The gating mechanism remains unknown. This Rattus norvegicus (Rat) protein is Calcium homeostasis modulator protein 2 (Calhm2).